A 609-amino-acid polypeptide reads, in one-letter code: Replication factor A protein 1 (609 aa).

Residues 130 to 152 (QNEQNNASAPRTGISTSTNSFYG) are compositionally biased toward polar residues. The disordered stretch occupies residues 130 to 166 (QNEQNNASAPRTGISTSTNSFYGNNAAATAPAPPPMM). Positions 192–278 (WTIRARVTNK…NEYELMFERD (87 aa)) form a DNA-binding region, OB. The C4-type zinc-finger motif lies at 477–498 (CPAADCNKKVFDQGGSWRCEKC).

Belongs to the replication factor A protein 1 family. Component of the heterotrimeric canonical replication protein A complex (RPA).

It is found in the nucleus. Functionally, as part of the replication protein A (RPA/RP-A), a single-stranded DNA-binding heterotrimeric complex, may play an essential role in DNA replication, recombination and repair. Binds and stabilizes single-stranded DNA intermediates, preventing complementary DNA reannealing and recruiting different proteins involved in DNA metabolism. The chain is Replication factor A protein 1 (ssb1) from Schizosaccharomyces pombe (strain 972 / ATCC 24843) (Fission yeast).